Consider the following 329-residue polypeptide: Beta-ketoacyl-[acyl-carrier-protein] synthase III (329 aa).

Active-site residues include C123 and H256. The segment at 257–261 (QANIR) is ACP-binding. Residue N286 is part of the active site.

The protein belongs to the thiolase-like superfamily. FabH family. As to quaternary structure, homodimer.

It is found in the cytoplasm. The enzyme catalyses malonyl-[ACP] + acetyl-CoA + H(+) = 3-oxobutanoyl-[ACP] + CO2 + CoA. It functions in the pathway lipid metabolism; fatty acid biosynthesis. Its function is as follows. Catalyzes the condensation reaction of fatty acid synthesis by the addition to an acyl acceptor of two carbons from malonyl-ACP. Catalyzes the first condensation reaction which initiates fatty acid synthesis and may therefore play a role in governing the total rate of fatty acid production. Possesses both acetoacetyl-ACP synthase and acetyl transacylase activities. Its substrate specificity determines the biosynthesis of branched-chain and/or straight-chain of fatty acids. This is Beta-ketoacyl-[acyl-carrier-protein] synthase III from Burkholderia mallei (strain NCTC 10247).